A 669-amino-acid polypeptide reads, in one-letter code: DNA ligase (669 aa).

An NAD(+)-binding site is contributed by 35–39 (DFEYD). Positions 52–71 (YPEWDSPDSPTHRVGSDKTE) are disordered. Over residues 61–71 (PTHRVGSDKTE) the composition is skewed to basic and acidic residues. Residues 84–85 (SL) and Glu-115 each bind NAD(+). Catalysis depends on Lys-117, which acts as the N6-AMP-lysine intermediate. NAD(+) contacts are provided by Arg-138, Glu-175, Lys-290, and Lys-314. The Zn(2+) site is built by Cys-408, Cys-411, Cys-426, and Cys-432. The BRCT domain maps to 590 to 669 (PVSARLAGKT…EEEFLRLIEE (80 aa)).

This sequence belongs to the NAD-dependent DNA ligase family. LigA subfamily. Requires Mg(2+) as cofactor. The cofactor is Mn(2+).

It carries out the reaction NAD(+) + (deoxyribonucleotide)n-3'-hydroxyl + 5'-phospho-(deoxyribonucleotide)m = (deoxyribonucleotide)n+m + AMP + beta-nicotinamide D-nucleotide.. DNA ligase that catalyzes the formation of phosphodiester linkages between 5'-phosphoryl and 3'-hydroxyl groups in double-stranded DNA using NAD as a coenzyme and as the energy source for the reaction. It is essential for DNA replication and repair of damaged DNA. This chain is DNA ligase, found in Porphyromonas gingivalis (strain ATCC 33277 / DSM 20709 / CIP 103683 / JCM 12257 / NCTC 11834 / 2561).